The chain runs to 86 residues: Kappa-theraphotoxin-Cg1a 1 (86 aa).

An N-terminal signal peptide occupies residues 1–21 (MKVSVLITLAVLGVMFVWASA). Positions 22 to 50 (AELEERGSDQRDSPAWLKSMERIFQSGER) are excised as a propeptide. Cystine bridges form between cysteine 52–cysteine 66, cysteine 59–cysteine 71, and cysteine 65–cysteine 78. The segment at 55–56 (MF) is involved in active face. Phenylalanine 84 bears the Phenylalanine amide mark.

Belongs to the neurotoxin 10 (Hwtx-1) family. 28 (Jztx-11) subfamily. As to expression, expressed by the venom gland.

It localises to the secreted. This toxin acts as a voltage-dependent gating-modifier. It inhibits the sodium conductance (IC(50)=124 nM) and slows the fast inactivation (EC(50)=1180 nM) of Nav1.5/SCN5A. It significantly shifts the activation to more depolarized voltages and decreases the deactivation of Nav1.5 currents upon extreme depolarization, but only slightly affects voltage-dependence of steady-state inactivation. In addition, this toxin causes an approximately five-fold decrease in the rate of recovery from inactivation and an approximately 1.9-fold reduction in the closed-state inactivation rate. This toxin integrates the functions of site 3 toxins (alpha-scorpion toxins) with site 4 toxins (beta-scorpion and spider toxins) by targeting multiple sites on Nav1.5. Also shows inhibition of voltage-gated potassium channels (5 uM completely inhibits Kv2.1/KCNB1, whereas 5 uM moderately inhibits Kv4.2/KCND2 Kv4.1/KCND1 channels). The polypeptide is Kappa-theraphotoxin-Cg1a 1 (Chilobrachys guangxiensis (Chinese earth tiger tarantula)).